We begin with the raw amino-acid sequence, 515 residues long: Probable coatomer subunit delta (515 aa).

The segment covering Ala161–Leu180 has biased composition (basic and acidic residues). Residues Ala161–Lys231 form a disordered region. Residues Ser187–Ser198 show a composition bias toward low complexity. An MHD domain is found at Arg276–Val515.

The protein belongs to the adaptor complexes medium subunit family. Delta-COP subfamily. Oligomeric complex that consists of at least the alpha, beta, beta', gamma, delta, epsilon and zeta subunits.

The protein localises to the cytoplasm. Its subcellular location is the golgi apparatus membrane. The protein resides in the cytoplasmic vesicle. It is found in the COPI-coated vesicle membrane. Its function is as follows. The coatomer is a cytosolic protein complex that binds to dilysine motifs and reversibly associates with Golgi non-clathrin-coated vesicles, which further mediate biosynthetic protein transport from the ER, via the Golgi up to the trans Golgi network. Coatomer complex is required for budding from Golgi membranes, and is essential for the retrograde Golgi-to-ER transport of dilysine-tagged proteins. This Caenorhabditis elegans protein is Probable coatomer subunit delta.